Consider the following 541-residue polypeptide: Membrane protein insertase YidC (541 aa).

5 helical membrane-spanning segments follow: residues 7–27, 340–360, 415–435, 453–473, and 494–514; these read LFLVALLFVSFLIWQAWQTDH, QLIHSFVGNWGFAIIIITFIV, LGGCFPLLIQMPIFLALYYML, LAAPDPFYILPILMGVTMFFI, and PVIFTVFFLWFPSGLVLYYIV.

Belongs to the OXA1/ALB3/YidC family. Type 1 subfamily. Interacts with the Sec translocase complex via SecD. Specifically interacts with transmembrane segments of nascent integral membrane proteins during membrane integration.

It is found in the cell inner membrane. Its function is as follows. Required for the insertion and/or proper folding and/or complex formation of integral membrane proteins into the membrane. Involved in integration of membrane proteins that insert both dependently and independently of the Sec translocase complex, as well as at least some lipoproteins. Aids folding of multispanning membrane proteins. The protein is Membrane protein insertase YidC of Edwardsiella ictaluri (strain 93-146).